The sequence spans 40 residues: Dermonecrotic toxin LgSicTox-alphaI-1 (40 aa).

Glutamate 32 and aspartate 34 together coordinate Mg(2+).

Belongs to the arthropod phospholipase D family. Class II subfamily. It depends on Mg(2+) as a cofactor. Contains 2 disulfide bonds. In terms of tissue distribution, expressed by the venom gland.

The protein resides in the secreted. The catalysed reaction is an N-(acyl)-sphingosylphosphocholine = an N-(acyl)-sphingosyl-1,3-cyclic phosphate + choline. It catalyses the reaction an N-(acyl)-sphingosylphosphoethanolamine = an N-(acyl)-sphingosyl-1,3-cyclic phosphate + ethanolamine. It carries out the reaction a 1-acyl-sn-glycero-3-phosphocholine = a 1-acyl-sn-glycero-2,3-cyclic phosphate + choline. The enzyme catalyses a 1-acyl-sn-glycero-3-phosphoethanolamine = a 1-acyl-sn-glycero-2,3-cyclic phosphate + ethanolamine. Dermonecrotic toxins cleave the phosphodiester linkage between the phosphate and headgroup of certain phospholipids (sphingolipid and lysolipid substrates), forming an alcohol (often choline) and a cyclic phosphate. This toxin acts on sphingomyelin (SM). It may also act on ceramide phosphoethanolamine (CPE), lysophosphatidylcholine (LPC) and lysophosphatidylethanolamine (LPE), but not on lysophosphatidylserine (LPS), and lysophosphatidylglycerol (LPG). It acts by transphosphatidylation, releasing exclusively cyclic phosphate products as second products. In vivo, intradermal injection induces dermonecrosis. Induces, hemolysis, vascular permeability, edema, inflammatory response, and platelet aggregation. In Loxosceles gaucho (Spider), this protein is Dermonecrotic toxin LgSicTox-alphaI-1.